We begin with the raw amino-acid sequence, 243 residues long: Uridylate kinase (243 aa).

An ATP-binding site is contributed by 15-18 (KMSG). Gly-57 serves as a coordination point for UMP. Residues Gly-58 and Arg-62 each contribute to the ATP site. UMP contacts are provided by residues Asp-77 and 138–145 (TGNPLVTT). ATP-binding residues include Thr-165, Asn-166, Tyr-171, and Asp-174.

The protein belongs to the UMP kinase family. Homohexamer.

It localises to the cytoplasm. The enzyme catalyses UMP + ATP = UDP + ADP. It functions in the pathway pyrimidine metabolism; CTP biosynthesis via de novo pathway; UDP from UMP (UMPK route): step 1/1. Inhibited by UTP. Catalyzes the reversible phosphorylation of UMP to UDP. The polypeptide is Uridylate kinase (Coxiella burnetii (strain RSA 493 / Nine Mile phase I)).